A 571-amino-acid chain; its full sequence is Dihydroxy-acid dehydratase (571 aa).

Position 56 (cysteine 56) interacts with [2Fe-2S] cluster. Aspartate 88 serves as a coordination point for Mg(2+). Cysteine 129 provides a ligand contact to [2Fe-2S] cluster. Mg(2+) is bound by residues aspartate 130 and lysine 131. Lysine 131 is subject to N6-carboxylysine. A [2Fe-2S] cluster-binding site is contributed by cysteine 201. Glutamate 452 contributes to the Mg(2+) binding site. Serine 478 acts as the Proton acceptor in catalysis.

It belongs to the IlvD/Edd family. Homodimer. It depends on [2Fe-2S] cluster as a cofactor. The cofactor is Mg(2+).

The enzyme catalyses (2R)-2,3-dihydroxy-3-methylbutanoate = 3-methyl-2-oxobutanoate + H2O. The catalysed reaction is (2R,3R)-2,3-dihydroxy-3-methylpentanoate = (S)-3-methyl-2-oxopentanoate + H2O. The protein operates within amino-acid biosynthesis; L-isoleucine biosynthesis; L-isoleucine from 2-oxobutanoate: step 3/4. Its pathway is amino-acid biosynthesis; L-valine biosynthesis; L-valine from pyruvate: step 3/4. Functionally, functions in the biosynthesis of branched-chain amino acids. Catalyzes the dehydration of (2R,3R)-2,3-dihydroxy-3-methylpentanoate (2,3-dihydroxy-3-methylvalerate) into 2-oxo-3-methylpentanoate (2-oxo-3-methylvalerate) and of (2R)-2,3-dihydroxy-3-methylbutanoate (2,3-dihydroxyisovalerate) into 2-oxo-3-methylbutanoate (2-oxoisovalerate), the penultimate precursor to L-isoleucine and L-valine, respectively. The protein is Dihydroxy-acid dehydratase of Streptococcus mutans serotype c (strain ATCC 700610 / UA159).